Here is a 195-residue protein sequence, read N- to C-terminus: Kiwa protein KwaA (195 aa).

The next 3 membrane-spanning stretches (helical) occupy residues 10–30 (GLYI…TAKI), 46–66 (LVLT…SIYF), and 117–137 (IAYL…DKYY).

The protein localises to the cell inner membrane. In terms of biological role, component of antiviral defense system Kiwa, composed of KwaA and KwaB. Expression of Kiwa in E.coli (strain MG1655) confers resistance to phages lambda and SECphi18. This is Kiwa protein KwaA from Escherichia coli O55:H7 (strain RM12579 / EPEC).